A 1058-amino-acid polypeptide reads, in one-letter code: Probable plasma membrane ATPase (1058 aa).

A compositionally biased stretch (polar residues) spans 1–29; that stretch reads MDNNQIPKNSPESSAINSAESSPKSNVSS. The interval 1 to 123 is disordered; that stretch reads MDNNQIPKNS…SSSGKKEEDY (123 aa). Residues 1–212 lie on the Cytoplasmic side of the membrane; it reads MDNNQIPKNS…DVKRYPILEF (212 aa). Over residues 31–40 the composition is skewed to basic and acidic residues; that stretch reads VLHENHHKEQ. The segment covering 41 to 66 has biased composition (low complexity); that stretch reads QQLQQQLQQEQQQQQLPTTPQSEPTQ. Polar residues predominate over residues 96-111; sequence SLKTISGYPSSKNTEA. A helical transmembrane segment spans residues 213–232; sequence LYFMWNPLSWTMEVAAIVSI. Residues 233 to 237 lie on the Extracellular side of the membrane; that stretch reads ALLDW. The helical transmembrane segment at 238–258 threads the bilayer; sequence VDFILICALLLLNATIGFIEE. Over 259 to 387 the chain is Cytoplasmic; it reads NTAGNAVEAL…GHLQVILRNI (129 aa). A helical transmembrane segment spans residues 388-407; sequence GLFCISFIAIWVLVELLVDF. The Extracellular portion of the chain corresponds to 408-425; sequence LGYDGYCHGVGGGRCLPL. A helical transmembrane segment spans residues 426–447; sequence NNALVLLVGGIPIAMPTVLSVT. Residues 448-783 lie on the Cytoplasmic side of the membrane; the sequence is MAIGATQLSK…SSRKIFQRMR (336 aa). Asp-480 (4-aspartylphosphate intermediate) is an active-site residue. The Mg(2+) site is built by Asp-728 and Asp-732. The helical transmembrane segment at 784–805 threads the bilayer; sequence NYVIYSVAATVRICTTFGILTV. Over 806–810 the chain is Extracellular; the sequence is AWNFK. Residues 811 to 833 form a helical membrane-spanning segment; sequence FPTIATVIIAILNDGTMLTISKD. Residues 834-849 lie on the Cytoplasmic side of the membrane; the sequence is RVRARNEPDQWNLFEV. A helical transmembrane segment spans residues 850–870; it reads FTMALCYGFYLVGSTIVFFAI. Residues 871–889 lie on the Extracellular side of the membrane; it reads IHDGTWFHDAINLRILTDN. Residues 890–910 traverse the membrane as a helical segment; it reads ELRGLIYLQVSISGLATIFVS. Topologically, residues 911–922 are cytoplasmic; sequence RSQGFSYFERPG. A helical transmembrane segment spans residues 923-943; sequence NLVIFAFVMSQIVATFIGVYG. The Extracellular portion of the chain corresponds to 944–967; that stretch reads FRGYPHDSFSDNPDYPVHGTNFQG. A helical transmembrane segment spans residues 968–988; sequence CGWGWAVCAWIWCFLWYIPMD. At 989–1058 the chain is on the cytoplasmic side; it reads FIKLGVTYIL…HKSVVTDNKV (70 aa).

This sequence belongs to the cation transport ATPase (P-type) (TC 3.A.3) family. Type IIIA subfamily.

The protein localises to the cell membrane. The enzyme catalyses ATP + H2O + H(+)(in) = ADP + phosphate + 2 H(+)(out). With respect to regulation, acid pH levels increase its ATPase activity. P-type plasma membrane H+-ATPase (proton pump). The proton gradient it generates drives the active transport of nutrients by H(+) symport. The resulting external acidification and/or internal alkinization may mediate growth responses. This Dictyostelium discoideum (Social amoeba) protein is Probable plasma membrane ATPase (patB).